The following is a 318-amino-acid chain: Olfactory receptor 56A1 (318 aa).

The Extracellular segment spans residues 1–32; the sequence is MIQPMASPSNSSTVPVSEFLLICFPNFQSWQH. A glycan (N-linked (GlcNAc...) asparagine) is linked at Asn10. A helical transmembrane segment spans residues 33 to 53; the sequence is WLSLPLSLLFLLAMGANTTLL. Residues 54-61 lie on the Cytoplasmic side of the membrane; the sequence is ITIQLEAS. Residues 62-82 traverse the membrane as a helical segment; it reads LHQPLYYLLSLLSLLDIVLCL. Residues 83–106 are Extracellular-facing; the sequence is TVIPKVLAIFWYDLRSISFPACFL. Cys104 and Cys196 are disulfide-bonded. A helical membrane pass occupies residues 107-127; that stretch reads QMFIMNSFLPMESCTFMVMAY. The Cytoplasmic portion of the chain corresponds to 128–146; it reads DRYVAICHPLRYPSIITNQ. The chain crosses the membrane as a helical span at residues 147-167; it reads FVAKASVFIVVRNALLTAPIP. The Extracellular segment spans residues 168 to 203; the sequence is ILTSLLHYCGENVIENCICANLSVSRLSCDNFTLNR. Residues Asn188 and Asn198 are each glycosylated (N-linked (GlcNAc...) asparagine). The chain crosses the membrane as a helical span at residues 204–224; that stretch reads IYQFVAGWTLLGSDLFLIFLS. Residues 225 to 244 lie on the Cytoplasmic side of the membrane; that stretch reads YTFILRAVLRFKAEGAAVKA. Residues 245 to 265 traverse the membrane as a helical segment; the sequence is LSTCGSHFILILFFSTILLVV. Residues 266–280 lie on the Extracellular side of the membrane; sequence VLTNVARKKVPMDIL. Residues 281–301 form a helical membrane-spanning segment; the sequence is ILLNVLHHLIPPALNPIVYGV. Topologically, residues 302–318 are cytoplasmic; sequence RTKEIKQGIQKLLQRGR.

The protein belongs to the G-protein coupled receptor 1 family.

It localises to the cell membrane. In terms of biological role, odorant receptor. In Homo sapiens (Human), this protein is Olfactory receptor 56A1 (OR56A1).